We begin with the raw amino-acid sequence, 62 residues long: Large ribosomal subunit protein bL28 (62 aa).

The disordered stretch occupies residues 1 to 23; it reads MARRCFVTGKSAKAGNARSHSMR.

The protein belongs to the bacterial ribosomal protein bL28 family.

The sequence is that of Large ribosomal subunit protein bL28 from Brevibacillus brevis (strain 47 / JCM 6285 / NBRC 100599).